The sequence spans 394 residues: Elongation factor Tu (394 aa).

The region spanning 10-204 (KPHVNVGTIG…AMDDYIPAPE (195 aa)) is the tr-type G domain. A G1 region spans residues 19-26 (GHVDHGKT). 19 to 26 (GHVDHGKT) lines the GTP pocket. T26 is a Mg(2+) binding site. The interval 60 to 64 (GITIN) is G2. The segment at 81–84 (DCPG) is G3. GTP contacts are provided by residues 81 to 85 (DCPGH) and 136 to 139 (NKCD). The G4 stretch occupies residues 136 to 139 (NKCD). The tract at residues 174 to 176 (SAL) is G5.

The protein belongs to the TRAFAC class translation factor GTPase superfamily. Classic translation factor GTPase family. EF-Tu/EF-1A subfamily. As to quaternary structure, monomer.

The protein localises to the cytoplasm. The enzyme catalyses GTP + H2O = GDP + phosphate + H(+). In terms of biological role, GTP hydrolase that promotes the GTP-dependent binding of aminoacyl-tRNA to the A-site of ribosomes during protein biosynthesis. This Francisella tularensis subsp. tularensis (strain FSC 198) protein is Elongation factor Tu.